We begin with the raw amino-acid sequence, 363 residues long: Zinc phosphodiesterase ELAC protein 1 (363 aa).

Zn(2+) is bound by residues His62, His64, Asp66, His67, His182, Asp253, and His313. Asp66 serves as the catalytic Proton acceptor.

The protein belongs to the RNase Z family. As to quaternary structure, homodimer. Requires Zn(2+) as cofactor. Widely expressed. Expressed in heart, brain, placenta, lung, liver, skeletal muscle, kidney and pancreas.

It is found in the cytoplasm. The protein localises to the cytosol. Its subcellular location is the nucleus. The enzyme catalyses Endonucleolytic cleavage of RNA, removing extra 3' nucleotides from tRNA precursor, generating 3' termini of tRNAs. A 3'-hydroxy group is left at the tRNA terminus and a 5'-phosphoryl group is left at the trailer molecule.. Functionally, zinc phosphodiesterase, which displays some tRNA 3'-processing endonuclease activity. Specifically involved in tRNA repair: acts downstream of the ribosome-associated quality control (RQC) pathway by removing a 2',3'-cyclic phosphate from tRNAs following cleavage by ANKZF1. tRNAs are then processed by TRNT1. The chain is Zinc phosphodiesterase ELAC protein 1 from Homo sapiens (Human).